The sequence spans 228 residues: Urease accessory protein UreE (228 aa).

The interval 193–228 is disordered; the sequence is HGSGLHIHGIHSHGDGHSHSHDDHDHDHNHDHDHKH. Over residues 204 to 228 the composition is skewed to basic and acidic residues; that stretch reads SHGDGHSHSHDDHDHDHNHDHDHKH.

The protein belongs to the UreE family.

The protein localises to the cytoplasm. Its function is as follows. Involved in urease metallocenter assembly. Binds nickel. Probably functions as a nickel donor during metallocenter assembly. In Yersinia rohdei, this protein is Urease accessory protein UreE.